The following is a 400-amino-acid chain: Queuine tRNA-ribosyltransferase (400 aa).

D93 (proton acceptor) is an active-site residue. Residues D93–F97, D147, Q190, and G217 each bind substrate. The tract at residues G248 to D254 is RNA binding. D267 (nucleophile) is an active-site residue. The tract at residues T272 to R276 is RNA binding; important for wobble base 34 recognition. The Zn(2+) site is built by C305, C307, C310, and H336. The interval R375–R400 is disordered. The span at A388–R400 shows a compositional bias: low complexity.

This sequence belongs to the queuine tRNA-ribosyltransferase family. In terms of assembly, homodimer. Within each dimer, one monomer is responsible for RNA recognition and catalysis, while the other monomer binds to the replacement base PreQ1. The cofactor is Zn(2+).

The catalysed reaction is 7-aminomethyl-7-carbaguanine + guanosine(34) in tRNA = 7-aminomethyl-7-carbaguanosine(34) in tRNA + guanine. The protein operates within tRNA modification; tRNA-queuosine biosynthesis. Its function is as follows. Catalyzes the base-exchange of a guanine (G) residue with the queuine precursor 7-aminomethyl-7-deazaguanine (PreQ1) at position 34 (anticodon wobble position) in tRNAs with GU(N) anticodons (tRNA-Asp, -Asn, -His and -Tyr). Catalysis occurs through a double-displacement mechanism. The nucleophile active site attacks the C1' of nucleotide 34 to detach the guanine base from the RNA, forming a covalent enzyme-RNA intermediate. The proton acceptor active site deprotonates the incoming PreQ1, allowing a nucleophilic attack on the C1' of the ribose to form the product. After dissociation, two additional enzymatic reactions on the tRNA convert PreQ1 to queuine (Q), resulting in the hypermodified nucleoside queuosine (7-(((4,5-cis-dihydroxy-2-cyclopenten-1-yl)amino)methyl)-7-deazaguanosine). The chain is Queuine tRNA-ribosyltransferase from Symbiobacterium thermophilum (strain DSM 24528 / JCM 14929 / IAM 14863 / T).